The following is a 200-amino-acid chain: NADH-quinone oxidoreductase subunit C (200 aa).

Belongs to the complex I 30 kDa subunit family. NDH-1 is composed of 14 different subunits. Subunits NuoB, C, D, E, F, and G constitute the peripheral sector of the complex.

The protein localises to the cell inner membrane. It catalyses the reaction a quinone + NADH + 5 H(+)(in) = a quinol + NAD(+) + 4 H(+)(out). NDH-1 shuttles electrons from NADH, via FMN and iron-sulfur (Fe-S) centers, to quinones in the respiratory chain. The immediate electron acceptor for the enzyme in this species is believed to be ubiquinone. Couples the redox reaction to proton translocation (for every two electrons transferred, four hydrogen ions are translocated across the cytoplasmic membrane), and thus conserves the redox energy in a proton gradient. This Paraburkholderia phytofirmans (strain DSM 17436 / LMG 22146 / PsJN) (Burkholderia phytofirmans) protein is NADH-quinone oxidoreductase subunit C.